Reading from the N-terminus, the 230-residue chain is Secretory carrier-associated membrane protein 4 (230 aa).

Residues 1-39 (MSGKENNFPPLPKFIPLKPCFYQNFSDEIPIEHQVLVKR) are Cytoplasmic-facing. A run of 4 helical transmembrane segments spans residues 40 to 60 (IYRL…ACLA), 61 to 81 (WWIA…LLLF), 105 to 125 (FMAF…QAVG), and 149 to 169 (VVML…AVMI). Topologically, residues 170 to 230 (MKVHSIYRGT…SYPASGGQWP (61 aa)) are cytoplasmic. T194 is subject to Phosphothreonine. Positions 208–230 (FSGNSLPEYPTVPSYPASGGQWP) are disordered.

The protein belongs to the SCAMP family.

The protein resides in the membrane. Functionally, probably involved in membrane protein trafficking. The polypeptide is Secretory carrier-associated membrane protein 4 (SCAMP4) (Bos taurus (Bovine)).